The sequence spans 96 residues: Cytochrome c2 iso-2 (96 aa).

The heme c site is built by cysteine 10, cysteine 13, histidine 14, and methionine 75.

It belongs to the cytochrome c family. In terms of processing, binds 1 heme c group covalently per subunit.

Functionally, cytochrome c2 is found mainly in purple, non-sulfur, photosynthetic bacteria where it functions as the electron donor to the oxidized bacteriochlorophyll in the photophosphorylation pathway. However, it may also have a role in the respiratory chain and is found in some non-photosynthetic bacteria. In Magnetospirillum fulvum (Rhodospirillum fulvum), this protein is Cytochrome c2 iso-2.